We begin with the raw amino-acid sequence, 847 residues long: Aryl hydrocarbon receptor (847 aa).

Residues methionine 1 to histidine 39 are disordered. Short sequence motifs (nuclear localization signal) lie at residues arginine 13–arginine 16 and lysine 37–arginine 42. The 54-residue stretch at proline 27–lysine 80 folds into the bHLH domain. The tract at residues arginine 38–lysine 66 is DNA-binding. Required for maintaining the overall integrity of the AHR:ARNT heterodimer and its transcriptional activity stretches follow at residues leucine 50–phenylalanine 82, leucine 117–valine 125, and phenylalanine 264–isoleucine 266. The Nuclear export signal motif lies at leucine 64–leucine 72. In terms of domain architecture, PAS 1 spans alanine 120–leucine 173. A PAS 2 domain is found at lysine 281 to isoleucine 336. Positions leucine 346–leucine 384 constitute a PAC domain. Disordered stretches follow at residues lysine 430 to serine 452 and histidine 825 to leucine 847. Residues threonine 440 to serine 452 are compositionally biased toward polar residues.

Homodimer. Heterodimer; efficient DNA binding requires dimerization with another bHLH protein. Binds MYBBP1A. Interacts with coactivators including SRC-1, RIP140 and NOCA7, and with the corepressor SMRT. Interacts with NEDD8 and IVNS1ABP. Interacts with BMAL1. Interacts with HSP90AB1. Interacts with ARNT; the heterodimer ARNT:AHR binds to core DNA sequence 5'-TGCGTG-3' within the dioxin response element (DRE) of target gene promoters and activates their transcription. Interacts with TIPARP; leading to mono-ADP-ribosylation of AHR and subsequent inhibition of AHR. Mono-ADP-ribosylated, leading to inhibit transcription activator activity of AHR.

The protein resides in the cytoplasm. It is found in the nucleus. In terms of biological role, ligand-activated transcription factor that enables cells to adapt to changing conditions by sensing compounds from the environment, diet, microbiome and cellular metabolism, and which plays important roles in development, immunity and cancer. Upon ligand binding, translocates into the nucleus, where it heterodimerizes with ARNT and induces transcription by binding to xenobiotic response elements (XRE). Regulates a variety of biological processes, including angiogenesis, hematopoiesis, drug and lipid metabolism, cell motility and immune modulation. Xenobiotics can act as ligands: upon xenobiotic-binding, activates the expression of multiple phase I and II xenobiotic chemical metabolizing enzyme genes (such as the CYP1A1 gene). Mediates biochemical and toxic effects of halogenated aromatic hydrocarbons. Next to xenobiotics, natural ligands derived from plants, microbiota, and endogenous metabolism are potent AHR agonists. Tryptophan (Trp) derivatives constitute an important class of endogenous AHR ligands. Acts as a negative regulator of anti-tumor immunity: indoles and kynurenic acid generated by Trp catabolism act as ligand and activate AHR, thereby promoting AHR-driven cancer cell motility and suppressing adaptive immunity. Regulates the circadian clock by inhibiting the basal and circadian expression of the core circadian component PER1. Inhibits PER1 by repressing the CLOCK-BMAL1 heterodimer mediated transcriptional activation of PER1. The heterodimer ARNT:AHR binds to core DNA sequence 5'-TGCGTG-3' within the dioxin response element (DRE) of target gene promoters and activates their transcription. This chain is Aryl hydrocarbon receptor (AHR), found in Oryctolagus cuniculus (Rabbit).